The primary structure comprises 35 residues: Mu-thomitoxin-Hme1c (35 aa).

3 disulfide bridges follow: cysteine 2–cysteine 18, cysteine 9–cysteine 23, and cysteine 17–cysteine 34.

It belongs to the neurotoxin 07 (Beta/delta-agtx) family. In terms of tissue distribution, expressed by the venom gland.

It localises to the secreted. Its function is as follows. Gating-modifier toxin that inhibits mammalian and insect voltage-gated sodium channels. It shifts the voltage dependence of channel activation to more positive voltages. It shows potent activity on Nav1.4/SCN4A (IC(50)=103 nM), Nav1.5/SCN5A (IC(50)=268 nM) and Para/DmNav1 (IC(50)=555 nM) and lower activities on Nav1.2/SCN2A (IC(50)=1447 nM) and Nav1.6/SCN8A (IC(50)=3504 nM). In addition, at a concentration of 1 uM, the toxin inhibits 90-100% of sodium current through Nav1.2/SCN2A, Nav1.4/SCN4A, Nav1.5/SCN5A, Nav1.6/SCN8A and Para/DmNav1 channels, when the voltage of maximal activation of the channel in control conditions is applied. It binds to the S3-S4 helix-loop-helix motif in the voltage-sensing domain of repeat 1 (shown on hNav1.4/SCN4A). The toxin is amphiphilic and binds to both neutral and negatively charged lipid vesicles with high affinity. The hydrophobic face lies on the opposite side to the hydrophobic faces of classical gating modifiers. The chain is Mu-thomitoxin-Hme1c from Heriaeus mellotteei (Crab spider).